A 240-amino-acid chain; its full sequence is Leucyl/phenylalanyl-tRNA--protein transferase (240 aa).

The protein belongs to the L/F-transferase family.

It localises to the cytoplasm. It carries out the reaction N-terminal L-lysyl-[protein] + L-leucyl-tRNA(Leu) = N-terminal L-leucyl-L-lysyl-[protein] + tRNA(Leu) + H(+). It catalyses the reaction N-terminal L-arginyl-[protein] + L-leucyl-tRNA(Leu) = N-terminal L-leucyl-L-arginyl-[protein] + tRNA(Leu) + H(+). The enzyme catalyses L-phenylalanyl-tRNA(Phe) + an N-terminal L-alpha-aminoacyl-[protein] = an N-terminal L-phenylalanyl-L-alpha-aminoacyl-[protein] + tRNA(Phe). In terms of biological role, functions in the N-end rule pathway of protein degradation where it conjugates Leu, Phe and, less efficiently, Met from aminoacyl-tRNAs to the N-termini of proteins containing an N-terminal arginine or lysine. This is Leucyl/phenylalanyl-tRNA--protein transferase from Maridesulfovibrio salexigens (strain ATCC 14822 / DSM 2638 / NCIMB 8403 / VKM B-1763) (Desulfovibrio salexigens).